A 1090-amino-acid polypeptide reads, in one-letter code: Nitrogen assimilation transcription factor nit-4 (1090 aa).

A compositionally biased stretch (polar residues) spans Met-1–Ala-14. Positions Met-1 to Asn-43 are disordered. Residues Cys-53–Cys-81 constitute a DNA-binding region (zn(2)-C6 fungal-type). Disordered stretches follow at residues Arg-145–Val-176, Phe-666–Pro-689, His-773–Gln-798, Gly-825–Pro-875, Gln-936–Gln-999, and His-1033–Gly-1053. Positions Gly-167 to Val-176 are enriched in basic and acidic residues. The span at Phe-666–Thr-677 shows a compositional bias: polar residues. A compositionally biased stretch (low complexity) spans Gln-849–Gln-859. Gly residues-rich tracts occupy residues Leu-940 to Gly-965 and Asn-976 to Thr-988. Over residues Gln-990 to Gln-999 the composition is skewed to low complexity.

It is found in the nucleus. Its function is as follows. Pathway-specific regulatory gene of nitrate assimilation; it activates the transcription of the genes for nitrate and nitrite reductases. This chain is Nitrogen assimilation transcription factor nit-4 (nit-4), found in Neurospora crassa (strain ATCC 24698 / 74-OR23-1A / CBS 708.71 / DSM 1257 / FGSC 987).